A 435-amino-acid chain; its full sequence is Estrogen-related receptor gamma (435 aa).

A disordered region spans residues 1–64 (MSNKDRHIDS…GLDSPPLYPS (64 aa)). The span at 10-29 (SSCSSFIKTEPSSPASLTDS) shows a compositional bias: polar residues. A compositionally biased stretch (low complexity) spans 34–47 (SPGGSSDASGSYSS). The segment at residues 102-177 (KRLCLVCGDI…VGMLKEGVRL (76 aa)) is a DNA-binding region (nuclear receptor). NR C4-type zinc fingers lie at residues 105-125 (CLVC…CEAC) and 141-160 (CPAT…CQAC). Positions 210–434 (PYNKIVSHLL…KLFSEMLEAK (225 aa)) constitute an NR LBD domain.

Belongs to the nuclear hormone receptor family. NR3 subfamily. In terms of assembly, homodimer. Interacts with NRIP1, NCOA1 and NCOR2. Binds TLE1, PNRC1 and PNRC2. Binds GRIP1. Post-translationally, acetylated by PCAF/KAT2 (in vitro).

It is found in the nucleus. In terms of biological role, orphan receptor that acts as a transcription activator in the absence of bound ligand. Binds specifically to an estrogen response element and activates reporter genes controlled by estrogen response elements. Induces the expression of PERM1 in the skeletal muscle. In Pongo abelii (Sumatran orangutan), this protein is Estrogen-related receptor gamma (ESRRG).